The sequence spans 250 residues: NAD(P)H-hydrate epimerase (250 aa).

A YjeF N-terminal domain is found at 14-238 (AAALDVELMS…SIAEKYGIQK (225 aa)). (6S)-NADPHX is bound at residue 74–78 (NNGGD). K(+) is bound by residues Asn75 and Asp143. Residues 147 to 154 (GFSFHGTA), Tyr159, and Asp180 contribute to the (6S)-NADPHX site. A K(+)-binding site is contributed by Ser183.

Belongs to the NnrE/AIBP family. Requires K(+) as cofactor.

The catalysed reaction is (6R)-NADHX = (6S)-NADHX. It carries out the reaction (6R)-NADPHX = (6S)-NADPHX. Its function is as follows. Catalyzes the epimerization of the S- and R-forms of NAD(P)HX, a damaged form of NAD(P)H that is a result of enzymatic or heat-dependent hydration. This is a prerequisite for the S-specific NAD(P)H-hydrate dehydratase to allow the repair of both epimers of NAD(P)HX. The sequence is that of NAD(P)H-hydrate epimerase from Thalassiosira pseudonana (Marine diatom).